The following is a 467-amino-acid chain: MTCRTRFAPSPTGYLHIGGARTALYCWLEARHRGGQFVLRIEDTDRERSTQAAIDAILEAMEWLGLGYDEGPIYQTQRIARYQEVAEQLLAQGKAYYAYETREELDAMREAAMAKQEKPRYNGAAREQQLPYRDDPNRVIRFKNPLAGTVVFDDLIKGRIEIANSELDDMVIFRPDGYPTYNFAVVVDDWDMGITEVIRGDDHINNTPRQINIYEALGAPVPKFAHMPMILDEQGAKLSKRTGAADVMQYKDAGYLPHALINYLARLGWSHGDQELFSQQELLDLFDVKDVNSKAARLDMAKLGWVNQHYLKTDDPASIAPQLEYQLRKLGIDVAAGPAAADVVVALRERVQTLKEMAEKAVVWYQPLETYDEAAVIKHLKLGAEVPLGKAREMLAALNEWSVENVSAALHAAAAALELGMGKVAQPLRVAITGTQVSPDISQTVYLAGREGALKRIDAALIKIGAA.

A 'HIGH' region motif is present at residues 9–19; that stretch reads PSPTGYLHIGG. Residues 237-241 carry the 'KMSKS' region motif; it reads KLSKR. K240 lines the ATP pocket.

It belongs to the class-I aminoacyl-tRNA synthetase family. Glutamate--tRNA ligase type 1 subfamily. As to quaternary structure, monomer.

The protein localises to the cytoplasm. It catalyses the reaction tRNA(Glu) + L-glutamate + ATP = L-glutamyl-tRNA(Glu) + AMP + diphosphate. In terms of biological role, catalyzes the attachment of glutamate to tRNA(Glu) in a two-step reaction: glutamate is first activated by ATP to form Glu-AMP and then transferred to the acceptor end of tRNA(Glu). The sequence is that of Glutamate--tRNA ligase from Xanthomonas campestris pv. campestris (strain B100).